We begin with the raw amino-acid sequence, 576 residues long: Arginine--tRNA ligase (576 aa).

A 'HIGH' region motif is present at residues 122 to 132; that stretch reads PNVAKEMHVGH.

The protein belongs to the class-I aminoacyl-tRNA synthetase family. Monomer.

Its subcellular location is the cytoplasm. It catalyses the reaction tRNA(Arg) + L-arginine + ATP = L-arginyl-tRNA(Arg) + AMP + diphosphate. The chain is Arginine--tRNA ligase from Serratia proteamaculans (strain 568).